The following is a 396-amino-acid chain: MSLPFSQDERDLAAGGILTIDLAALRHNYSAIATRIAPTRTAAVVKADAYGLGASRVAPAFYEAGCRDFFVAHLGEAVALKPFLKPDATLYVLNGLQPGTEAACAREGILPVLNSLEQVENWAALATRLGKKLPALLQFDTGMSRLGLSAKEFDRLLENVTLLSRIDIKFAISHLANGDEPGNAANARQLAKMTALLARLPKLPAALANSGGTFLGKTYYFDLARPGIALYGIDPERQHDFSDKVAHENKKPKHSILPVLPLSARVIQVRDVDKGATVGYGGTYVANGPMRIATIAVGYADGLFRSLSNKGAAFFGDTRLPIIGRVSMDSITLDVTSLPEGTLKLGSLVELIGPHQRLEDVARDCDTIPYEILTALGNRYARVYVYVNGGGTSTTA.

K46 (proton acceptor; specific for D-alanine) is an active-site residue. Residue K46 is modified to N6-(pyridoxal phosphate)lysine. R145 is a substrate binding site. Y280 functions as the Proton acceptor; specific for L-alanine in the catalytic mechanism. M328 contributes to the substrate binding site.

It belongs to the alanine racemase family. The cofactor is pyridoxal 5'-phosphate.

The enzyme catalyses L-alanine = D-alanine. It participates in amino-acid biosynthesis; D-alanine biosynthesis; D-alanine from L-alanine: step 1/1. In terms of biological role, catalyzes the interconversion of L-alanine and D-alanine. May also act on other amino acids. This chain is Alanine racemase (alr), found in Brucella ovis (strain ATCC 25840 / 63/290 / NCTC 10512).